The sequence spans 219 residues: Cytidylate kinase (219 aa).

11 to 19 contacts ATP; it reads GPAGVGKTT.

This sequence belongs to the cytidylate kinase family. Type 1 subfamily.

Its subcellular location is the cytoplasm. The catalysed reaction is CMP + ATP = CDP + ADP. The enzyme catalyses dCMP + ATP = dCDP + ADP. The chain is Cytidylate kinase from Oleidesulfovibrio alaskensis (strain ATCC BAA-1058 / DSM 17464 / G20) (Desulfovibrio alaskensis).